A 262-amino-acid polypeptide reads, in one-letter code: Acyl-[acyl-carrier-protein]--UDP-N-acetylglucosamine O-acyltransferase (262 aa).

Belongs to the transferase hexapeptide repeat family. LpxA subfamily. In terms of assembly, homotrimer.

It localises to the cytoplasm. The enzyme catalyses a (3R)-hydroxyacyl-[ACP] + UDP-N-acetyl-alpha-D-glucosamine = a UDP-3-O-[(3R)-3-hydroxyacyl]-N-acetyl-alpha-D-glucosamine + holo-[ACP]. Its pathway is glycolipid biosynthesis; lipid IV(A) biosynthesis; lipid IV(A) from (3R)-3-hydroxytetradecanoyl-[acyl-carrier-protein] and UDP-N-acetyl-alpha-D-glucosamine: step 1/6. Functionally, involved in the biosynthesis of lipid A, a phosphorylated glycolipid that anchors the lipopolysaccharide to the outer membrane of the cell. The sequence is that of Acyl-[acyl-carrier-protein]--UDP-N-acetylglucosamine O-acyltransferase from Vibrio atlanticus (strain LGP32) (Vibrio splendidus (strain Mel32)).